The following is an 82-amino-acid chain: DNA-directed RNA polymerase subunit omega (82 aa).

Belongs to the RNA polymerase subunit omega family. In terms of assembly, in cyanobacteria the RNAP catalytic core is composed of 2 alpha, 1 beta, 1 beta', 1 gamma and 1 omega subunit. When a sigma factor is associated with the core the holoenzyme is formed, which can initiate transcription.

It carries out the reaction RNA(n) + a ribonucleoside 5'-triphosphate = RNA(n+1) + diphosphate. Functionally, promotes RNA polymerase assembly. Latches the N- and C-terminal regions of the beta' subunit thereby facilitating its interaction with the beta and alpha subunits. The protein is DNA-directed RNA polymerase subunit omega of Synechococcus sp. (strain CC9902).